Consider the following 324-residue polypeptide: Polycomb complex protein BMI-1-B (324 aa).

An RING-type zinc finger spans residues Cys-18 to Asp-57. The short motif at Lys-81 to Arg-95 is the Nuclear localization signal element. Positions Ile-232–Gly-324 are disordered. The segment covering Asp-256–Pro-279 has biased composition (low complexity). Polar residues-rich tracts occupy residues Val-280 to Gly-295 and Asn-303 to Gly-324.

As to quaternary structure, component of a PRC1-like complex. Homodimer. Interacts with cbx2.

The protein resides in the nucleus. Functionally, component of a Polycomb group (PcG) multiprotein PRC1-like complex, a complex class required to maintain the transcriptionally repressive state of many genes, including Hox genes, throughout development. PcG PRC1 complex acts via chromatin remodeling and modification of histones; it mediates monoubiquitination of histone H2A 'Lys-119', rendering chromatin heritably changed in its expressibility. In the PRC1 complex, it is required to stimulate the E3 ubiquitin-protein ligase activity of rnf2. The chain is Polycomb complex protein BMI-1-B (bmi1b) from Danio rerio (Zebrafish).